A 623-amino-acid polypeptide reads, in one-letter code: uncharacterized protein (623 aa).

5 helical membrane-spanning segments follow: residues 242-262 (IALALMILALLLGLRKLITWL), 288-308 (IVSPVSVFLALFSCDVALDIF), 318-338 (VSMWVGAVYIMLLAWLVIALF), 361-381 (VINLILKVVYFLIFIVALLGV), and 387-407 (FNVSAIIASLGIGGLAVALAV).

Belongs to the MscS (TC 1.A.23) family.

The protein resides in the cell membrane. This is an uncharacterized protein from Helicobacter pylori (strain J99 / ATCC 700824) (Campylobacter pylori J99).